Reading from the N-terminus, the 372-residue chain is Tryptophan--tRNA ligase (372 aa).

Positions 79–87 (PSGKFHFGH) match the 'HIGH' region motif. The interval 247–268 (KLQPGLDGRKMSSSRPDSTIFL) is disordered. The short motif at 256–260 (KMSSS) is the 'KMSKS' region element. Over residues 257 to 267 (MSSSRPDSTIF) the composition is skewed to polar residues.

The protein belongs to the class-I aminoacyl-tRNA synthetase family.

The protein resides in the cytoplasm. It carries out the reaction tRNA(Trp) + L-tryptophan + ATP = L-tryptophyl-tRNA(Trp) + AMP + diphosphate + H(+). This chain is Tryptophan--tRNA ligase, found in Aeropyrum pernix (strain ATCC 700893 / DSM 11879 / JCM 9820 / NBRC 100138 / K1).